A 741-amino-acid polypeptide reads, in one-letter code: uncharacterized protein (741 aa).

5 helical membrane-spanning segments follow: residues 34–54, 76–96, 120–140, 156–176, and 187–207; these read WLLWVTAGLVLFLLALVLLII, LIIPFIALFATIITFQVFING, LAVLFIWITGTAFLSGLFVSL, LSVFFGVLLLSLLFSCVLIII, and LLLLLGVSLASFTTVILAFSI. The span at 404–423 shows a compositional bias: basic and acidic residues; sequence EAEEKERQEKEEKEKAEKDN. Disordered regions lie at residues 404-473 and 555-647; these read EAEE…FRPR and QKEL…ENAK. Polar residues predominate over residues 424-439; that stretch reads GNGQDSNKVNSVSTEP. 2 stretches are compositionally biased toward basic and acidic residues: residues 445–465 and 555–573; these read SDADSKDNNDSSDSQGKDSSK and QKELTEKNKQKQDGKDQKS. Over residues 623 to 643 the composition is skewed to acidic residues; the sequence is DNTDESEDKQSEEEEKFDEEI. A run of 2 helical transmembrane segments spans residues 655–675 and 715–735; these read AFFNTASIWLSSPFLFFENGA and VIIAMVLVVTLGLLVGSFFAY.

This sequence to M.pneumoniae MPN_333.

The protein localises to the cell membrane. This is an uncharacterized protein from Mycoplasma pneumoniae (strain ATCC 29342 / M129 / Subtype 1) (Mycoplasmoides pneumoniae).